We begin with the raw amino-acid sequence, 1016 residues long: Kinesin-like protein KIN-14K (1016 aa).

A Calponin-homology (CH) domain is found at 14 to 121 (ADRRAEVIEW…CLLVLRESVS (108 aa)). The segment at 123–176 (GLRDGTSKAPLRKKWRVPETGEPLVPGVAQGKTSPGEDKRNGLPDPKSQQKTPI) is disordered. Positions 288–354 (VNGTNEENQM…EVMTSMHEQQ (67 aa)) form a coiled coil. Residues 481–808 (NIRVYCRVRP…LKFAERVSGV (328 aa)) form the Kinesin motor domain. 565-572 (GQTGSGKT) lines the ATP pocket. The stretch at 820–852 (KDIKELLEQVASLKDTIVRKDTEIEQLQLMKDK) forms a coiled coil. Polar residues-rich tracts occupy residues 884-893 (NQQSQLSDPQ) and 990-1004 (KTPN…QLIG). 2 disordered regions span residues 884 to 912 (NQQS…DITP) and 971 to 1016 (LTKN…RWQK).

It belongs to the TRAFAC class myosin-kinesin ATPase superfamily. Kinesin family. KIN-14 subfamily.

The protein is Kinesin-like protein KIN-14K of Oryza sativa subsp. japonica (Rice).